A 225-amino-acid polypeptide reads, in one-letter code: MNGIRDVVREEQPRERLLLEGAGSLSNRELLAVLLRTGSKEETVLTLSDNILHHFDGLRMLKDATLEEMMSIHGVGIAKASQLMAAFELGRRMVRLEYQNRYSIRSPEDCASYMMEEMRFLQQEHFVCLYLNTKNQVIHRQTIFIGSLNTSIVHPREVFKEAFRRAAASIICLHNHPSGDPAPSREDIEVTKRLVECGRIIGIEVLDHIIIGDHKFVSLKEKGHI.

One can recognise an MPN domain in the interval 103 to 225 (SIRSPEDCAS…FVSLKEKGHI (123 aa)). Zn(2+) contacts are provided by His174, His176, and Asp187. Positions 174 to 187 (HNHPSGDPAPSRED) match the JAMM motif motif.

This sequence belongs to the UPF0758 family.

The chain is UPF0758 protein BcerKBAB4_4299 from Bacillus mycoides (strain KBAB4) (Bacillus weihenstephanensis).